The sequence spans 696 residues: uncharacterized protein (696 aa).

The 134-residue stretch at S293 to E426 folds into the GGDEF domain. One can recognise an EAL domain in the interval R435–N689.

This is an uncharacterized protein from Synechocystis sp. (strain ATCC 27184 / PCC 6803 / Kazusa).